A 61-amino-acid chain; its full sequence is Alpha-conotoxin-like Tx1.2 (61 aa).

A signal peptide spans 1–20; the sequence is MFTVFLLVVLATTVVSFTSG. A propeptide spanning residues 21–42 is cleaved from the precursor; sequence RSTFRGRNAAAKASGLVSLTDR. 2 positions are modified to 4-hydroxyproline: Pro44 and Pro50. Cystine bridges form between Cys46–Cys52 and Cys47–Cys60. Residues 48–50 are ser-Xaa-Pro motif, crucial for potent interaction with nAChR; it reads SHP.

Belongs to the conotoxin A superfamily. In terms of tissue distribution, expressed by the venom duct.

Its subcellular location is the secreted. Alpha-conotoxins act on postsynaptic membranes, they bind to the nicotinic acetylcholine receptors (nAChR) and thus inhibit them. This toxin also inhibits high voltage-activated (HVA) calcium channel currents in rat DRG neurons (8% inhibition at 1 uM toxin) probably by activating GABA(B) receptors (GABBR1 and/or GABBR2). This chain is Alpha-conotoxin-like Tx1.2, found in Conus textile (Cloth-of-gold cone).